The sequence spans 539 residues: Tyrosinase (539 aa).

Positions 63, 84, 93, 290, 294, and 333 each coordinate Cu cation. The segment at residues 82-84 (CHH) is a cross-link (2'-(S-cysteinyl)-histidine (Cys-His)).

This sequence belongs to the tyrosinase family. As to quaternary structure, homotetramer. It depends on Cu(2+) as a cofactor. The N-terminus is blocked.

It catalyses the reaction 2 L-dopa + O2 = 2 L-dopaquinone + 2 H2O. It carries out the reaction L-tyrosine + O2 = L-dopaquinone + H2O. Activated by acidifying treatment at pH 3.0. Its function is as follows. This is a copper-containing oxidase that functions in the formation of pigments such as melanins and other polyphenolic compounds. The polypeptide is Tyrosinase (melO) (Aspergillus oryzae (strain ATCC 42149 / RIB 40) (Yellow koji mold)).